The primary structure comprises 255 residues: Hydroxyacylglutathione hydrolase (255 aa).

7 residues coordinate Zn(2+): histidine 55, histidine 57, aspartate 59, histidine 60, histidine 111, aspartate 131, and histidine 169.

This sequence belongs to the metallo-beta-lactamase superfamily. Glyoxalase II family. As to quaternary structure, monomer. Requires Zn(2+) as cofactor.

It carries out the reaction an S-(2-hydroxyacyl)glutathione + H2O = a 2-hydroxy carboxylate + glutathione + H(+). The protein operates within secondary metabolite metabolism; methylglyoxal degradation; (R)-lactate from methylglyoxal: step 2/2. Functionally, thiolesterase that catalyzes the hydrolysis of S-D-lactoyl-glutathione to form glutathione and D-lactic acid. In Chromohalobacter salexigens (strain ATCC BAA-138 / DSM 3043 / CIP 106854 / NCIMB 13768 / 1H11), this protein is Hydroxyacylglutathione hydrolase.